The primary structure comprises 167 residues: Phosphorelay intermediate protein YPD1 (167 aa).

Residues 24–129 enclose the HPt domain; that stretch reads DSDFSKGLII…DDEEIKIQVD (106 aa). H64 carries the post-translational modification Phosphohistidine.

It belongs to the YPD1 family. Interacts with the response regulatory domains of SLN1 and SSK1. Post-translationally, the phosphorelay mechanism involves the sequential transfer of a phosphate group from 'His-576' (H1) to 'Asp-1144' (D1) of SLN1, then to His-64 (H2) of YPD1 and finally to 'Asp-554' (D2) of SSK1 or 'Asp-427' (D2) of SKN7.

Its subcellular location is the cytoplasm. It localises to the nucleus. In terms of biological role, phosphorelay intermediate protein that is part of the branched SLN1-YPD1-SKN7/SSK1 two-component regulatory system, which controls activity of the HOG1 pathway and gene expression in response to changes in the osmolarity of the extracellular environment. Catalyzes the phosphoryl group transfer from the membrane-bound osmosensing histidine kinase SLN1 to two distinct response regulator proteins, SSK1 in the cytoplasm, and transcription factor SKN7 in the nucleus. This chain is Phosphorelay intermediate protein YPD1 (YPD1), found in Saccharomyces cerevisiae (strain ATCC 204508 / S288c) (Baker's yeast).